A 90-amino-acid polypeptide reads, in one-letter code: DNA-directed RNA polymerase subunit Rpo5 (90 aa).

The protein belongs to the archaeal Rpo5/eukaryotic RPB5 RNA polymerase subunit family. In terms of assembly, part of the RNA polymerase complex.

Its subcellular location is the cytoplasm. The catalysed reaction is RNA(n) + a ribonucleoside 5'-triphosphate = RNA(n+1) + diphosphate. Functionally, DNA-dependent RNA polymerase (RNAP) catalyzes the transcription of DNA into RNA using the four ribonucleoside triphosphates as substrates. This is DNA-directed RNA polymerase subunit Rpo5 from Aeropyrum pernix (strain ATCC 700893 / DSM 11879 / JCM 9820 / NBRC 100138 / K1).